The chain runs to 1265 residues: 1-phosphatidylinositol 4,5-bisphosphate phosphodiesterase gamma-2 (1265 aa).

The PH domain occupies 20–131 (RALELGTVMT…WLSGLKILHQ (112 aa)). In terms of domain architecture, PI-PLC X-box spans 312–456 (QDMNNPLSHY…LREKIIIKHK (145 aa)). Active-site residues include histidine 327 and histidine 372. SH2 domains are found at residues 532–635 (WFHK…TDPV) and 646–735 (WYYD…RYPV). Phosphotyrosine; by BTK occurs at positions 753 and 759. The region spanning 769–829 (MPQRTVKALY…PSNYVEDIST (61 aa)) is the SH3 domain. The region spanning 930 to 1044 (LSDLVVYCKP…GYVLQPESMR (115 aa)) is the PI-PLC Y-box domain. The C2 domain maps to 1038–1169 (LQPESMRTEK…SGFRSVPLKN (132 aa)). Phosphotyrosine; by BTK is present on tyrosine 1197. A phosphotyrosine mark is found at tyrosine 1217 and tyrosine 1245.

Part of a complex composed of EEIG1, TNFRSF11A/RANK, PLCG2, GAB2, TEC and BTK; complex formation increases in the presence of TNFSF11/RANKL. Interacts (via SH2 domain) with CSF1R (tyrosine phosphorylated). Interacts constitutively with THEMIS2. The cofactor is Ca(2+). Post-translationally, phosphorylated on tyrosine residues by CSF1R. Phosphorylated on tyrosine residues by BTK and SYK; upon ligand-induced activation of a variety of growth factor receptors and immune system receptors. Phosphorylation leads to increased phospholipase activity.

Its subcellular location is the membrane raft. It carries out the reaction a 1,2-diacyl-sn-glycero-3-phospho-(1D-myo-inositol-4,5-bisphosphate) + H2O = 1D-myo-inositol 1,4,5-trisphosphate + a 1,2-diacyl-sn-glycerol + H(+). In terms of biological role, the production of the second messenger molecules diacylglycerol (DAG) and inositol 1,4,5-trisphosphate (IP3) is mediated by activated phosphatidylinositol-specific phospholipase C enzymes. It is a crucial enzyme in transmembrane signaling. In Homo sapiens (Human), this protein is 1-phosphatidylinositol 4,5-bisphosphate phosphodiesterase gamma-2.